A 231-amino-acid chain; its full sequence is uncharacterized protein (231 aa).

This is an uncharacterized protein from Haemophilus influenzae (strain ATCC 51907 / DSM 11121 / KW20 / Rd).